Consider the following 367-residue polypeptide: Cell division protein FtsZ (367 aa).

GTP is bound by residues G17 to N21, G104 to G106, E135, K139, and D183.

This sequence belongs to the FtsZ family. As to quaternary structure, homodimer. Polymerizes to form a dynamic ring structure in a strictly GTP-dependent manner. Interacts directly with several other division proteins.

It localises to the cytoplasm. Its function is as follows. Essential cell division protein that forms a contractile ring structure (Z ring) at the future cell division site. The regulation of the ring assembly controls the timing and the location of cell division. One of the functions of the FtsZ ring is to recruit other cell division proteins to the septum to produce a new cell wall between the dividing cells. Binds GTP and shows GTPase activity. This Aquifex aeolicus (strain VF5) protein is Cell division protein FtsZ.